The sequence spans 160 residues: Lipoprotein signal peptidase (160 aa).

The next 3 helical transmembrane spans lie at 13–33 (IYIT…HLII), 72–92 (WFLS…ITKL), and 104–124 (SLII…GFVV). Active-site residues include D125 and D143. The helical transmembrane segment at 134–154 (WHFATFNIADCSIFIGIIILM) threads the bilayer.

It belongs to the peptidase A8 family.

It localises to the cell inner membrane. It carries out the reaction Release of signal peptides from bacterial membrane prolipoproteins. Hydrolyzes -Xaa-Yaa-Zaa-|-(S,diacylglyceryl)Cys-, in which Xaa is hydrophobic (preferably Leu), and Yaa (Ala or Ser) and Zaa (Gly or Ala) have small, neutral side chains.. The protein operates within protein modification; lipoprotein biosynthesis (signal peptide cleavage). In terms of biological role, this protein specifically catalyzes the removal of signal peptides from prolipoproteins. The chain is Lipoprotein signal peptidase from Buchnera aphidicola subsp. Acyrthosiphon pisum (strain Tuc7).